The following is a 487-amino-acid chain: Probable cytochrome P450 513B1 (487 aa).

The chain crosses the membrane as a helical span at residues 1–18 (MNLLVLSVILAIIIYLIF). C433 provides a ligand contact to heme.

Belongs to the cytochrome P450 family. It depends on heme as a cofactor.

It localises to the membrane. This Dictyostelium discoideum (Social amoeba) protein is Probable cytochrome P450 513B1 (cyp513B1).